Consider the following 485-residue polypeptide: PTS system arbutin-, cellobiose-, and salicin-specific EIIBC component (485 aa).

Positions methionine 1–proline 88 constitute a PTS EIIB type-1 domain. Cysteine 28 functions as the Phosphocysteine intermediate; for EIIB activity in the catalytic mechanism. Helical transmembrane passes span isoleucine 102–isoleucine 122, leucine 147–alanine 167, methionine 177–alanine 197, phenylalanine 207–methionine 227, leucine 254–isoleucine 274, isoleucine 285–valine 305, valine 330–tryptophan 350, alanine 363–isoleucine 383, leucine 389–alanine 409, and isoleucine 433–leucine 453. The region spanning aspartate 108–lysine 470 is the PTS EIIC type-1 domain.

The protein localises to the cell inner membrane. Functionally, the phosphoenolpyruvate-dependent sugar phosphotransferase system (sugar PTS), a major carbohydrate active -transport system, catalyzes the phosphorylation of incoming sugar substrates concomitantly with their translocation across the cell membrane. This system is involved in arbutin, cellobiose, and salicin transport. The sequence is that of PTS system arbutin-, cellobiose-, and salicin-specific EIIBC component (ascF) from Escherichia coli (strain K12).